The following is a 268-amino-acid chain: Phosphatidylglycerol--prolipoprotein diacylglyceryl transferase (268 aa).

A run of 7 helical transmembrane segments spans residues 23 to 43 (IGLRWYGLMYLLGFVFARWLA), 62 to 82 (LLFNGFMGVFIGGRVGDVFFY), 97 to 117 (VWEGGMSFHGGLIGVIVAMIW), 132 to 152 (FVAPLIPFGLGLGRIGNFINL), 179 to 199 (SQLYEAFLEGLVLFAILNIFI), 206 to 226 (ASVAGLFLIGYGVFRFIVEYV), and 241 to 261 (GQALCLPMIIGGAFIMAWAYS). Arg-145 is an a 1,2-diacyl-sn-glycero-3-phospho-(1'-sn-glycerol) binding site.

Belongs to the Lgt family.

The protein localises to the cell inner membrane. It catalyses the reaction L-cysteinyl-[prolipoprotein] + a 1,2-diacyl-sn-glycero-3-phospho-(1'-sn-glycerol) = an S-1,2-diacyl-sn-glyceryl-L-cysteinyl-[prolipoprotein] + sn-glycerol 1-phosphate + H(+). The protein operates within protein modification; lipoprotein biosynthesis (diacylglyceryl transfer). Functionally, catalyzes the transfer of the diacylglyceryl group from phosphatidylglycerol to the sulfhydryl group of the N-terminal cysteine of a prolipoprotein, the first step in the formation of mature lipoproteins. This chain is Phosphatidylglycerol--prolipoprotein diacylglyceryl transferase, found in Haemophilus influenzae (strain PittEE).